The sequence spans 319 residues: MEHCTFNLPDVQASKPSIAINLTRVGVTNVKKLVEIKRKDKRPIVLISTFDVFVDLPSDRKGANLSRNFEAVDEVLEKILSMPVYEIEQLCSDIAHNLLGRHEYANQAEVRMTSEYMIRRASPATGIKCQEVVNIFAEASAVRGQGNDDYFDVKKLIGAEVVGMTACPCAQEIMRDKAANELSELGVDKDTIIKFLERVPMATHNQRGRGIISIKVAHDFDVSLESIISIIDHSMSSSVYEVLKRADEKVVVETAHMNPKFVEDCVRTMADNVVKEFPNLPDNAVITIKQTNEESIHRHNAYAERVALMGDLRSEINHC.

It belongs to the GTP cyclohydrolase IV family. In terms of assembly, homodimer. Requires Fe(2+) as cofactor.

It carries out the reaction GTP + H2O = 7,8-dihydroneopterin 2',3'-cyclic phosphate + formate + diphosphate + H(+). Its pathway is cofactor biosynthesis; 5,6,7,8-tetrahydromethanopterin biosynthesis. Functionally, converts GTP to 7,8-dihydro-D-neopterin 2',3'-cyclic phosphate, the first intermediate in the biosynthesis of coenzyme methanopterin. The polypeptide is GTP cyclohydrolase MptA (Methanosarcina barkeri (strain Fusaro / DSM 804)).